The primary structure comprises 505 residues: ATP synthase subunit alpha, chloroplastic (505 aa).

An ATP-binding site is contributed by 170–177; it reads GDRQTGKT.

Belongs to the ATPase alpha/beta chains family. As to quaternary structure, F-type ATPases have 2 components, CF(1) - the catalytic core - and CF(0) - the membrane proton channel. CF(1) has five subunits: alpha(3), beta(3), gamma(1), delta(1), epsilon(1). CF(0) has four main subunits: a, b, b' and c.

Its subcellular location is the plastid. It is found in the chloroplast thylakoid membrane. It catalyses the reaction ATP + H2O + 4 H(+)(in) = ADP + phosphate + 5 H(+)(out). Produces ATP from ADP in the presence of a proton gradient across the membrane. The alpha chain is a regulatory subunit. This chain is ATP synthase subunit alpha, chloroplastic, found in Mesostigma viride (Green alga).